The following is a 176-amino-acid chain: Adenine phosphoribosyltransferase (176 aa).

Belongs to the purine/pyrimidine phosphoribosyltransferase family. In terms of assembly, homodimer.

It localises to the cytoplasm. The catalysed reaction is AMP + diphosphate = 5-phospho-alpha-D-ribose 1-diphosphate + adenine. It functions in the pathway purine metabolism; AMP biosynthesis via salvage pathway; AMP from adenine: step 1/1. Catalyzes a salvage reaction resulting in the formation of AMP, that is energically less costly than de novo synthesis. This chain is Adenine phosphoribosyltransferase, found in Methylobacillus flagellatus (strain ATCC 51484 / DSM 6875 / VKM B-1610 / KT).